We begin with the raw amino-acid sequence, 575 residues long: Serine/threonine-protein kinase YPK1 (575 aa).

The tract at residues 1–53 (MMSWKFGKKFKEGGFLSGKHHSSNNNSPSDTSRSTTPTPGNPHPEDAVKPPVP) is disordered. The segment covering 23-38 (SNNNSPSDTSRSTTPT) has biased composition (low complexity). Residues 245 to 500 (FELLKVIGKG…AQDIKNHPFF (256 aa)) enclose the Protein kinase domain. ATP contacts are provided by residues 251–259 (IGKGSFGKV) and lysine 274. Residue aspartate 368 is the Proton acceptor of the active site. Residues 502–573 (KHINFTKLWN…SVSPLGESVG (72 aa)) form the AGC-kinase C-terminal domain. Phosphoserine is present on residues serine 543 and serine 562.

It belongs to the protein kinase superfamily. AGC Ser/Thr protein kinase family. RAC subfamily.

The catalysed reaction is L-seryl-[protein] + ATP = O-phospho-L-seryl-[protein] + ADP + H(+). It catalyses the reaction L-threonyl-[protein] + ATP = O-phospho-L-threonyl-[protein] + ADP + H(+). Functionally, probable serine/threonine-protein kinase which may act in the sphingolipid-mediated signaling pathway. May act downstream of TORC2 (TOR complex 2) and PDK1 to regulate sphingolipid metabolism. In Cryptococcus neoformans var. grubii serotype A (strain H99 / ATCC 208821 / CBS 10515 / FGSC 9487) (Filobasidiella neoformans var. grubii), this protein is Serine/threonine-protein kinase YPK1.